A 353-amino-acid polypeptide reads, in one-letter code: Uroporphyrinogen decarboxylase (353 aa).

Substrate contacts are provided by residues 27–31 (RQAGR), phenylalanine 46, aspartate 76, tyrosine 152, serine 207, and histidine 321.

The protein belongs to the uroporphyrinogen decarboxylase family. Homodimer.

Its subcellular location is the cytoplasm. It carries out the reaction uroporphyrinogen III + 4 H(+) = coproporphyrinogen III + 4 CO2. It participates in porphyrin-containing compound metabolism; protoporphyrin-IX biosynthesis; coproporphyrinogen-III from 5-aminolevulinate: step 4/4. Catalyzes the decarboxylation of four acetate groups of uroporphyrinogen-III to yield coproporphyrinogen-III. This is Uroporphyrinogen decarboxylase from Listeria monocytogenes serotype 4b (strain F2365).